Reading from the N-terminus, the 854-residue chain is SH2 domain-containing protein 3C (854 aa).

Phosphoserine is present on Ser-22. Low complexity predominate over residues 34 to 43 (RSSASASIRS). Positions 34-129 (RSSASASIRS…AKEAGEGTEA (96 aa)) are disordered. Basic and acidic residues predominate over residues 99-124 (EVSRESHLVSRRLPEPPDLEAAKEAG). The 100-residue stretch at 215–314 (WYHGRIPREV…QSGAIIYCPV (100 aa)) folds into the SH2 domain. 2 positions are modified to phosphotyrosine: Tyr-273 and Tyr-278. Disordered regions lie at residues 330-384 (SQGS…PRDS), 398-417 (LHSP…YSTV), and 422-520 (APSA…ERQK). Residues 333–347 (SSKTASPASPSGSKG) show a composition bias toward low complexity. Ser-354 carries the post-translational modification Phosphoserine. Composition is skewed to low complexity over residues 400 to 415 (SPLS…PAYS), 422 to 436 (APSA…PASP), and 474 to 485 (SPSPSLSSYSDP). Phosphoserine is present on Ser-435. Residues 508–520 (TPRKARGSGERQK) are compositionally biased toward basic and acidic residues. The Ras-GEF domain occupies 580–848 (DARTLARHVT…TALSHKLEPA (269 aa)). Tyr-787 carries the phosphotyrosine modification.

Component of a complex comprised of SH2D3C, BCAR1/CAS, and CRK. Within the complex, interacts with CRK and (via C-terminus) with BCAR1/CAS (via C-terminus). Interacts with NEDD9/HEF1. Interacts with EPHB2. As to quaternary structure, interacts with NEDD9/HEF1. Interacts with BCAR1/CAS. Interacts with PTK2B. In terms of assembly, interacts (via C-terminus) with BCAR1/CAS (via C-terminus). Interacts with IGF1. Phosphorylated by MAPK/ERK upon T-cell receptor stimulation in T-cells. Expressed in the olfactory bulb and olfactory sensory neurons (at protein level). Expressed in B cells (at protein level). Expressed in T lymphocytes. In terms of tissue distribution, expressed in hematopoietic cells from spleen, lymph node and thymus (at protein level). Expressed weakly in the lung (at protein level). As to expression, expressed in the brain, lung, kidney, and weakly expressed in the liver and lung (at protein level).

The protein resides in the cytoplasm. The protein localises to the cell membrane. Its subcellular location is the cell projection. It is found in the axon. It localises to the ruffle membrane. Its function is as follows. Acts as an adapter protein that mediates cell signaling pathways involved in cellular functions such as cell adhesion and migration, tissue organization, and the regulation of the immune response. Plays a role in integrin-mediated cell adhesion through BCAR1-CRK-RAPGEF1 signaling and activation of the small GTPase RAP1. Promotes cell migration and invasion through the extracellular matrix. Required for marginal zone B-cell development and thymus-independent type 2 immune responses. Mediates migration and adhesion of B cells in the splenic marginal zone via promoting hyperphosphorylation of NEDD9/CASL. Plays a role in CXCL13-induced chemotaxis of B-cells. Plays a role in the migration of olfactory sensory neurons (OSNs) into the forebrain and the innervation of the olfactory bulb by the OSN axons during development. Required for the efficient tyrosine phosphorylation of BCAR1 in OSN axons. In terms of biological role, important regulator of chemokine-induced, integrin-mediated T lymphocyte adhesion and migration, acting upstream of RAP1. Required for tissue-specific adhesion of T lymphocytes to peripheral tissues. Required for basal and CXCL2 stimulated serine-threonine phosphorylation of NEDD9. May be involved in the regulation of T-cell receptor-mediated IL2 production through the activation of the JNK pathway in T-cells. Functionally, may be involved in the BCAR1/CAS-mediated JNK activation pathway. The protein is SH2 domain-containing protein 3C (Sh2d3c) of Mus musculus (Mouse).